The following is a 158-amino-acid chain: Large ribosomal subunit protein uL16 (158 aa).

It belongs to the universal ribosomal protein uL16 family. In terms of assembly, part of the 50S ribosomal subunit.

Its function is as follows. Binds 23S rRNA and is also seen to make contacts with the A and possibly P site tRNAs. This chain is Large ribosomal subunit protein uL16, found in Prochlorococcus marinus (strain MIT 9313).